The chain runs to 448 residues: Clusterin (448 aa).

Residues 1 to 21 form the signal peptide; the sequence is MKILLLCVALLLIWDNGMVLG. Positions 77 to 80 match the Nuclear localization signal motif; it reads KKKK. Disulfide bonds link Cys-101–Cys-312, Cys-112–Cys-304, Cys-115–Cys-301, Cys-120–Cys-294, and Cys-128–Cys-284. Asn-102 carries N-linked (GlcNAc...) asparagine glycosylation. Ser-132 is subject to Phosphoserine. Residues Asn-144, Asn-290, Asn-327, Asn-353, and Asn-373 are each glycosylated (N-linked (GlcNAc...) asparagine). Phosphoserine is present on Ser-395. Positions 442-446 match the Nuclear localization signal motif; it reads RRKSR.

It belongs to the clusterin family. As to quaternary structure, antiparallel disulfide-linked heterodimer of an alpha chain and a beta chain. Self-associates and forms higher oligomers. Interacts with a broad range of misfolded proteins, including APP, APOC2 and LYZ. Slightly acidic pH promotes interaction with misfolded proteins. Forms high-molecular weight oligomers upon interaction with misfolded proteins. Interacts with APOA1, LRP2, CLUAP1 and PON1. Interacts with the complement membrane attack complex. Interacts (via alpha chain) with XRCC6. Interacts with SYVN1, COMMD1, BTRC, CUL1 and with ubiquitin and SCF (SKP1-CUL1-F-box protein) E3 ubiquitin-protein ligase complexes. Interacts (via alpha chain) with BAX in stressed cells, where BAX undergoes a conformation change leading to association with the mitochondrial membrane. Does not interact with BAX in unstressed cells. Found in a complex with LTF, CLU, EPPIN and SEMG1. Interacts (immaturely glycosylated pre-secreted form) with HSPA5; this interaction promotes CLU stability and facilitates stress-induced CLU retrotranslocation from the secretory pathway to the mitochondria, thereby reducing stress-induced apoptosis by stabilizing mitochondrial membrane integrity. Interacts with BCL2L1; this interaction releases and activates BAX and promotes cell death. Interacts with TGFBR2 and ACVR1. Interacts (secreted form) with STMN3; this interaction may act as an important modulator during neuronal differentiation. Interacts with VLDLR and LRP8. Proteolytically cleaved on its way through the secretory system, probably within the Golgi lumen. Proteolytic cleavage is not necessary for its chaperone activity. All non-secreted forms are not proteolytically cleaved. Chaperone activity of uncleaved forms is dependent on a non-reducing environment. Post-translationally, polyubiquitinated, leading to proteasomal degradation. Under cellular stress, the intracellular level of cleaved form is reduced due to proteasomal degradation. In terms of processing, extensively glycosylated with sulfated N-linked carbohydrates. About 30% of the protein mass is comprised of complex N-linked carbohydrate. Endoplasmic reticulum (ER) stress induces changes in glycosylation status and increases level of hypoglycosylated forms. Core carbohydrates are essential for chaperone activity. Non-secreted forms are hypoglycosylated or unglycosylated. Most abundant in stomach, liver, brain, and testis, with intermediate levels in heart, ovary and kidney.

It is found in the secreted. It localises to the nucleus. Its subcellular location is the cytoplasm. The protein resides in the mitochondrion membrane. The protein localises to the cytosol. It is found in the microsome. It localises to the endoplasmic reticulum. Its subcellular location is the mitochondrion. The protein resides in the perinuclear region. The protein localises to the cytoplasmic vesicle. It is found in the secretory vesicle. It localises to the chromaffin granule. Functionally, functions as extracellular chaperone that prevents aggregation of non native proteins. Prevents stress-induced aggregation of blood plasma proteins. Inhibits formation of amyloid fibrils by APP, APOC2, B2M, CALCA, CSN3, SNCA and aggregation-prone LYZ variants (in vitro). Does not require ATP. Maintains partially unfolded proteins in a state appropriate for subsequent refolding by other chaperones, such as HSPA8/HSC70. Does not refold proteins by itself. Binding to cell surface receptors triggers internalization of the chaperone-client complex and subsequent lysosomal or proteasomal degradation. When secreted, protects cells against apoptosis and against cytolysis by complement: inhibits assembly of the complement membrane attack complex (MAC) by preventing polymerization of C9 pore component of the MAC complex. Intracellular forms interact with ubiquitin and SCF (SKP1-CUL1-F-box protein) E3 ubiquitin-protein ligase complexes and promote the ubiquitination and subsequent proteasomal degradation of target proteins. Promotes proteasomal degradation of COMMD1 and IKBKB. Modulates NF-kappa-B transcriptional activity. Following stress, promotes apoptosis. Inhibits apoptosis when associated with the mitochondrial membrane by interference with BAX-dependent release of cytochrome c into the cytoplasm. Plays a role in the regulation of cell proliferation. Following ER stress, suppresses stress-induced apoptosis by stabilizing mitochondrial membrane integrity through interaction with HSPA5. When secreted, does not affect caspase or BAX-mediated intrinsic apoptosis and TNF-induced NF-kappa-B-activity. When secreted, acts as an important modulator during neuronal differentiation through interaction with STMN3. Plays a role in the clearance of immune complexes that arise during cell injury. This Mus musculus (Mouse) protein is Clusterin.